Consider the following 267-residue polypeptide: Ribosomal RNA small subunit methyltransferase A (267 aa).

Residues Asn18, Leu20, Gly45, Glu66, Asp91, and Asn112 each contribute to the S-adenosyl-L-methionine site.

Belongs to the class I-like SAM-binding methyltransferase superfamily. rRNA adenine N(6)-methyltransferase family. RsmA subfamily.

It is found in the cytoplasm. The enzyme catalyses adenosine(1518)/adenosine(1519) in 16S rRNA + 4 S-adenosyl-L-methionine = N(6)-dimethyladenosine(1518)/N(6)-dimethyladenosine(1519) in 16S rRNA + 4 S-adenosyl-L-homocysteine + 4 H(+). In terms of biological role, specifically dimethylates two adjacent adenosines (A1518 and A1519) in the loop of a conserved hairpin near the 3'-end of 16S rRNA in the 30S particle. May play a critical role in biogenesis of 30S subunits. The chain is Ribosomal RNA small subunit methyltransferase A from Shewanella amazonensis (strain ATCC BAA-1098 / SB2B).